Here is a 165-residue protein sequence, read N- to C-terminus: Methylated-DNA--protein-cysteine methyltransferase, constitutive (165 aa).

The active-site Nucleophile; methyl group acceptor is the cysteine 130.

Belongs to the MGMT family.

It is found in the cytoplasm. The enzyme catalyses a 6-O-methyl-2'-deoxyguanosine in DNA + L-cysteinyl-[protein] = S-methyl-L-cysteinyl-[protein] + a 2'-deoxyguanosine in DNA. It catalyses the reaction a 4-O-methyl-thymidine in DNA + L-cysteinyl-[protein] = a thymidine in DNA + S-methyl-L-cysteinyl-[protein]. Involved in the cellular defense against the biological effects of O6-methylguanine (O6-MeG) and O4-methylthymine (O4-MeT) in DNA. Repairs the methylated nucleobase in DNA by stoichiometrically transferring the methyl group to a cysteine residue in the enzyme. This is a suicide reaction: the enzyme is irreversibly inactivated. This chain is Methylated-DNA--protein-cysteine methyltransferase, constitutive, found in Bacillus subtilis (strain 168).